Consider the following 656-residue polypeptide: Methionine--tRNA ligase (656 aa).

A 'HIGH' region motif is present at residues 11–21 (YYVNDIPHIGH). C126, C129, C147, and C150 together coordinate Zn(2+). The 'KMSKS' region motif lies at 301–305 (KMSKS). An ATP-binding site is contributed by K304. The tRNA-binding domain maps to 555 to 656 (DFKKVEIKVG…REKIAGSLIS (102 aa)).

It belongs to the class-I aminoacyl-tRNA synthetase family. MetG type 2A subfamily. As to quaternary structure, homodimer. Requires Zn(2+) as cofactor.

It is found in the cytoplasm. The catalysed reaction is tRNA(Met) + L-methionine + ATP = L-methionyl-tRNA(Met) + AMP + diphosphate. Functionally, is required not only for elongation of protein synthesis but also for the initiation of all mRNA translation through initiator tRNA(fMet) aminoacylation. The chain is Methionine--tRNA ligase (metG) from Helicobacter pylori (strain J99 / ATCC 700824) (Campylobacter pylori J99).